The following is a 401-amino-acid chain: Chalcone synthase 1 (401 aa).

Residue Cys-168 is part of the active site.

It belongs to the thiolase-like superfamily. Chalcone/stilbene synthases family.

The enzyme catalyses (E)-4-coumaroyl-CoA + 3 malonyl-CoA + 3 H(+) = 2',4,4',6'-tetrahydroxychalcone + 3 CO2 + 4 CoA. It participates in secondary metabolite biosynthesis; flavonoid biosynthesis. The primary product of this enzyme is 4,2',4',6'-tetrahydroxychalcone (also termed naringenin-chalcone or chalcone) which can under specific conditions spontaneously isomerize into naringenin. This chain is Chalcone synthase 1 (CHS1), found in Sorghum bicolor (Sorghum).